We begin with the raw amino-acid sequence, 122 residues long: Small ribosomal subunit protein uS13 (122 aa).

The interval arginine 93–lysine 122 is disordered.

It belongs to the universal ribosomal protein uS13 family. As to quaternary structure, part of the 30S ribosomal subunit. Forms a loose heterodimer with protein S19. Forms two bridges to the 50S subunit in the 70S ribosome.

In terms of biological role, located at the top of the head of the 30S subunit, it contacts several helices of the 16S rRNA. In the 70S ribosome it contacts the 23S rRNA (bridge B1a) and protein L5 of the 50S subunit (bridge B1b), connecting the 2 subunits; these bridges are implicated in subunit movement. Contacts the tRNAs in the A and P-sites. This chain is Small ribosomal subunit protein uS13, found in Corynebacterium urealyticum (strain ATCC 43042 / DSM 7109).